Consider the following 222-residue polypeptide: Cytidylate kinase (222 aa).

10–18 contributes to the ATP binding site; the sequence is GPAGSGKSS.

Belongs to the cytidylate kinase family. Type 1 subfamily.

The protein resides in the cytoplasm. The enzyme catalyses CMP + ATP = CDP + ADP. The catalysed reaction is dCMP + ATP = dCDP + ADP. The chain is Cytidylate kinase from Acholeplasma laidlawii (strain PG-8A).